Reading from the N-terminus, the 195-residue chain is Protein GrpE (195 aa).

The interval 1-30 (MSEQEKVEQEEISAELETQNEQEKPMEETE) is disordered. A compositionally biased stretch (acidic residues) spans 10 to 20 (EEISAELETQN).

It belongs to the GrpE family. As to quaternary structure, homodimer.

It localises to the cytoplasm. Its function is as follows. Participates actively in the response to hyperosmotic and heat shock by preventing the aggregation of stress-denatured proteins, in association with DnaK and GrpE. It is the nucleotide exchange factor for DnaK and may function as a thermosensor. Unfolded proteins bind initially to DnaJ; upon interaction with the DnaJ-bound protein, DnaK hydrolyzes its bound ATP, resulting in the formation of a stable complex. GrpE releases ADP from DnaK; ATP binding to DnaK triggers the release of the substrate protein, thus completing the reaction cycle. Several rounds of ATP-dependent interactions between DnaJ, DnaK and GrpE are required for fully efficient folding. This Histophilus somni (strain 2336) (Haemophilus somnus) protein is Protein GrpE.